The following is a 476-amino-acid chain: Glycogen synthase (476 aa).

An ADP-alpha-D-glucose-binding site is contributed by Lys-15.

It belongs to the glycosyltransferase 1 family. Bacterial/plant glycogen synthase subfamily.

It catalyses the reaction [(1-&gt;4)-alpha-D-glucosyl](n) + ADP-alpha-D-glucose = [(1-&gt;4)-alpha-D-glucosyl](n+1) + ADP + H(+). Its pathway is glycan biosynthesis; glycogen biosynthesis. Its function is as follows. Synthesizes alpha-1,4-glucan chains using ADP-glucose. The polypeptide is Glycogen synthase (Actinobacillus succinogenes (strain ATCC 55618 / DSM 22257 / CCUG 43843 / 130Z)).